The primary structure comprises 594 residues: Frizzled and smoothened-like protein A (594 aa).

An N-terminal signal peptide occupies residues 1-22; the sequence is MVDIRKSLFFIIFFIFYNYVNS. Over 23 to 248 the chain is Extracellular; sequence QKAINSDAFC…NEWYQFKDLT (226 aa). One can recognise an FZ domain in the interval 27–173; that stretch reads NSDAFCQKKT…SNYDLQCLNI (147 aa). 2 cysteine pairs are disulfide-bonded: cysteine 32/cysteine 98 and cysteine 41/cysteine 91. N-linked (GlcNAc...) asparagine glycans are attached at residues asparagine 55 and asparagine 106. An intrachain disulfide couples cysteine 117 to cysteine 170. Asparagine 182, asparagine 189, asparagine 195, and asparagine 206 each carry an N-linked (GlcNAc...) asparagine glycan. Residues 249-269 traverse the membrane as a helical segment; that stretch reads TVTGVISFVCIFFNIFIYGFL. At 270 to 277 the chain is on the cytoplasmic side; the sequence is NKKHDRHT. A helical membrane pass occupies residues 278 to 298; sequence IGILCLSFSLWCCMLSDLIVA. The Extracellular segment spans residues 299–329; sequence SSPDYSLVCPEPGRFARIHDSRCVANGIIFQ. The helical transmembrane segment at 330 to 350 threads the bilayer; sequence WGAVCTTMFWSAMAIDLYLVI. Over 351–361 the chain is Cytoplasmic; sequence KKLSLPAFTVK. The chain crosses the membrane as a helical span at residues 362-382; the sequence is YFVAAIFTLALLFTTVPLAWD. Residues 383-403 lie on the Extracellular side of the membrane; that stretch reads DYGYGFGGVGCWIMSNSVQNG. A helical transmembrane segment spans residues 404-424; it reads CFWIPMLICLLIGAVSICLII. At 425 to 448 the chain is on the cytoplasmic side; the sequence is YEIVKVFKNVGRSGISIILANARL. A helical membrane pass occupies residues 449–469; it reads FGIVSFIFIEYIYLFVYHFWV. The Extracellular portion of the chain corresponds to 470 to 507; sequence QENTEKFTQNITDWVICVQTTGSSDGCPLPKAVPYATQ. A glycan (N-linked (GlcNAc...) asparagine) is linked at asparagine 479. A helical transmembrane segment spans residues 508–528; sequence FIFLFFLRLLGIEVCIFYGIN. At 529-594 the chain is on the cytoplasmic side; that stretch reads SRSKNIILES…SKNGGDDDDL (66 aa).

This sequence belongs to the G-protein coupled receptor Fz/Smo family.

The protein resides in the membrane. This chain is Frizzled and smoothened-like protein A (fslA), found in Dictyostelium discoideum (Social amoeba).